The following is a 271-amino-acid chain: Cell surface glycoprotein CD200 receptor 2 (271 aa).

A signal peptide spans 1–23 (MSAPRLLISIIIMVSASSSSCMG). At 24 to 239 (GKQMTQNYST…TSGSPALSLL (216 aa)) the chain is on the extracellular side. N-linked (GlcNAc...) asparagine glycosylation is found at asparagine 30, asparagine 39, asparagine 86, asparagine 92, asparagine 189, and asparagine 217. The 87-residue stretch at 46 to 132 (MDINAVLCCP…YRGIVVTPDG (87 aa)) folds into the Ig-like V-type domain. The region spanning 133-221 (NFHRGYHLQV…SHLTGNKSLS (89 aa)) is the Ig-like C2-type domain. Cysteine 160 and cysteine 209 are oxidised to a cystine. The chain crosses the membrane as a helical span at residues 240 to 260 (IILYVKLSLFVVILVTTGFVF). Over 261 to 271 (FQRINHVRKVL) the chain is Cytoplasmic.

This sequence belongs to the CD200R family.

It is found in the membrane. Functionally, may be a receptor for the CD200/OX2 cell surface glycoprotein. In Homo sapiens (Human), this protein is Cell surface glycoprotein CD200 receptor 2 (CD200R1L).